The sequence spans 94 residues: Large ribosomal subunit protein bL25 (94 aa).

Belongs to the bacterial ribosomal protein bL25 family. As to quaternary structure, part of the 50S ribosomal subunit; part of the 5S rRNA/L5/L18/L25 subcomplex. Contacts the 5S rRNA. Binds to the 5S rRNA independently of L5 and L18.

This is one of the proteins that binds to the 5S RNA in the ribosome where it forms part of the central protuberance. The polypeptide is Large ribosomal subunit protein bL25 (Photorhabdus laumondii subsp. laumondii (strain DSM 15139 / CIP 105565 / TT01) (Photorhabdus luminescens subsp. laumondii)).